The following is a 380-amino-acid chain: Aminomethyltransferase (380 aa).

The protein belongs to the GcvT family. As to quaternary structure, the glycine cleavage system is composed of four proteins: P, T, L and H.

The catalysed reaction is N(6)-[(R)-S(8)-aminomethyldihydrolipoyl]-L-lysyl-[protein] + (6S)-5,6,7,8-tetrahydrofolate = N(6)-[(R)-dihydrolipoyl]-L-lysyl-[protein] + (6R)-5,10-methylene-5,6,7,8-tetrahydrofolate + NH4(+). Functionally, the glycine cleavage system catalyzes the degradation of glycine. This is Aminomethyltransferase from Koribacter versatilis (strain Ellin345).